Consider the following 121-residue polypeptide: Small ribosomal subunit protein uS13 (121 aa).

Residues 94 to 121 (GLPVRGQNTKNNARTRKGKAVAIAGKKK) form a disordered region. Residues 106 to 121 (ARTRKGKAVAIAGKKK) show a composition bias toward basic residues.

The protein belongs to the universal ribosomal protein uS13 family. Part of the 30S ribosomal subunit. Forms a loose heterodimer with protein S19. Forms two bridges to the 50S subunit in the 70S ribosome.

Its function is as follows. Located at the top of the head of the 30S subunit, it contacts several helices of the 16S rRNA. In the 70S ribosome it contacts the 23S rRNA (bridge B1a) and protein L5 of the 50S subunit (bridge B1b), connecting the 2 subunits; these bridges are implicated in subunit movement. Contacts the tRNAs in the A and P-sites. In Streptococcus sanguinis (strain SK36), this protein is Small ribosomal subunit protein uS13.